A 547-amino-acid chain; its full sequence is Collagen EMF1-alpha (547 aa).

Disordered regions lie at residues 1–99 (GVPG…APGV) and 116–311 (GPDG…GGGI). The segment at 1 to 280 (GVPGPNGDVG…QGPRGGQGPK (280 aa)) is triple-helical region. Low complexity-rich tracts occupy residues 27–69 (QGPD…IRGQ) and 160–175 (QGSK…VGPQ). K187 carries the allysine modification. The span at 219–228 (VKGEKGEVGD) shows a compositional bias: basic and acidic residues. Residues 246–271 (DAGPAGPIGDAGIQGPPGQDGPTGAQ) show a composition bias toward low complexity. A compositionally biased stretch (gly residues) spans 272 to 281 (GPRGGQGPKG). Residues 308 to 336 (GGGIILVPVNDQNPTRSPVSGSVFYRGQA) form a telopeptide region. Residues 337–547 (EETDVNLGSV…GFEMGPACFY (211 aa)) constitute a propeptide, C-terminal propeptide. The Fibrillar collagen NC1 domain occupies 343 to 547 (LGSVADVIEL…GFEMGPACFY (205 aa)). N-linked (GlcNAc...) asparagine glycans are attached at residues N381 and N406.

This sequence belongs to the fibrillar collagen family.

The protein resides in the secreted. It localises to the extracellular space. It is found in the extracellular matrix. In Ephydatia muelleri (Mueller's freshwater sponge), this protein is Collagen EMF1-alpha (COLF1).